Consider the following 276-residue polypeptide: Diaminopimelate epimerase (276 aa).

Substrate is bound by residues Asn-13, Gln-46, and Asn-66. Cys-75 functions as the Proton donor in the catalytic mechanism. Residues Gly-76–Asn-77, Asn-159, Asn-192, and Glu-210–Arg-211 contribute to the substrate site. Cys-219 (proton acceptor) is an active-site residue. Gly-220–Thr-221 lines the substrate pocket.

It belongs to the diaminopimelate epimerase family. Homodimer.

It is found in the cytoplasm. The catalysed reaction is (2S,6S)-2,6-diaminopimelate = meso-2,6-diaminopimelate. It functions in the pathway amino-acid biosynthesis; L-lysine biosynthesis via DAP pathway; DL-2,6-diaminopimelate from LL-2,6-diaminopimelate: step 1/1. In terms of biological role, catalyzes the stereoinversion of LL-2,6-diaminopimelate (L,L-DAP) to meso-diaminopimelate (meso-DAP), a precursor of L-lysine and an essential component of the bacterial peptidoglycan. This Azotobacter vinelandii (strain DJ / ATCC BAA-1303) protein is Diaminopimelate epimerase.